Here is a 95-residue protein sequence, read N- to C-terminus: Putative membrane protein insertion efficiency factor (95 aa).

The disordered stretch occupies residues 72-95 (FDPVPDAPTSPSPSSSCSCKGPHP). Positions 83-95 (SPSSSCSCKGPHP) are enriched in low complexity.

This sequence belongs to the UPF0161 family.

It localises to the cell inner membrane. Could be involved in insertion of integral membrane proteins into the membrane. This is Putative membrane protein insertion efficiency factor from Xanthomonas axonopodis pv. citri (strain 306).